The following is a 238-amino-acid chain: Putative type I specificity subunit S.MpnORF201P (238 aa).

It belongs to the type-I restriction system S methylase family. As to quaternary structure, the methyltransferase is composed of M and S polypeptides.

In terms of biological role, the specificity (S) subunit of a type I methyltransferase (MTase); this subunit dictates DNA sequence specificity. The single R subunit has multiple frameshifts and is probably not expressed. This is Putative type I specificity subunit S.MpnORF201P from Mycoplasma pneumoniae (strain ATCC 29342 / M129 / Subtype 1) (Mycoplasmoides pneumoniae).